Reading from the N-terminus, the 43-residue chain is Protein PsbN (43 aa).

Residues 7 to 27 (LIVFIASLLLGVTGYSVYTAF) traverse the membrane as a helical segment.

Belongs to the PsbN family.

Its subcellular location is the plastid. The protein resides in the chloroplast thylakoid membrane. In terms of biological role, may play a role in photosystem I and II biogenesis. The sequence is that of Protein PsbN from Rhodomonas salina (Cryptomonas salina).